The following is a 174-amino-acid chain: MIKSQVGRRYSKAIFEIAEEKKQVKEIYEMLNSAMVLYRTDKEFKHFILNPLIDNEQKKSVLNEIFGKDNSENLNILLYILDKGRMNCIKYIVAEYLKIYYRKNRILDVKATFTKELTDEQKKKLIDKLSQKTGKEINLEIKIDKDILGGGIIKIGDKIIDGSIRRELDNWRKS.

This sequence belongs to the ATPase delta chain family. F-type ATPases have 2 components, F(1) - the catalytic core - and F(0) - the membrane proton channel. F(1) has five subunits: alpha(3), beta(3), gamma(1), delta(1), epsilon(1). F(0) has three main subunits: a(1), b(2) and c(10-14). The alpha and beta chains form an alternating ring which encloses part of the gamma chain. F(1) is attached to F(0) by a central stalk formed by the gamma and epsilon chains, while a peripheral stalk is formed by the delta and b chains.

The protein localises to the cell inner membrane. In terms of biological role, f(1)F(0) ATP synthase produces ATP from ADP in the presence of a proton or sodium gradient. F-type ATPases consist of two structural domains, F(1) containing the extramembraneous catalytic core and F(0) containing the membrane proton channel, linked together by a central stalk and a peripheral stalk. During catalysis, ATP synthesis in the catalytic domain of F(1) is coupled via a rotary mechanism of the central stalk subunits to proton translocation. Functionally, this protein is part of the stalk that links CF(0) to CF(1). It either transmits conformational changes from CF(0) to CF(1) or is implicated in proton conduction. The protein is ATP synthase subunit delta of Fusobacterium nucleatum subsp. nucleatum (strain ATCC 25586 / DSM 15643 / BCRC 10681 / CIP 101130 / JCM 8532 / KCTC 2640 / LMG 13131 / VPI 4355).